Consider the following 146-residue polypeptide: Large ribosomal subunit protein uL15 (146 aa).

The segment at 1–46 (MKLHELQPAPGSRKKAVRVGRGIGSGNGKTAGRGHKGQKARSGGGV) is disordered. A compositionally biased stretch (gly residues) spans 21-31 (RGIGSGNGKTA).

This sequence belongs to the universal ribosomal protein uL15 family. Part of the 50S ribosomal subunit.

Its function is as follows. Binds to the 23S rRNA. This is Large ribosomal subunit protein uL15 from Geobacillus thermodenitrificans (strain NG80-2).